Consider the following 289-residue polypeptide: Probable early E4 33 kDa protein (289 aa).

Belongs to the adenoviridae E4 30 to 34 kDa protein family. Interacts with E1B-55k.

Its subcellular location is the host nucleus. It is found in the host cytoplasm. Functionally, plays a major role to prevent cellular inhibition of viral genome replication by nuclear bodies. Assembles an SCF-like E3 ubiquitin ligase complex based on the cellular proteins ELOB, ELOC, CUL5 and RBX1, in cooperation with viral E1B-55K. This viral RING-type ligase ubiquitinates cellular substrates prior to proteasomal degradation: p53/TP53, LIG4, MRE11-RAD50-NBS1 (MRN) complex, ITGA3, DAXX and BLM. The sequence is that of Probable early E4 33 kDa protein from Mus musculus (Mouse).